Consider the following 837-residue polypeptide: Translation initiation factor IF-2 (837 aa).

Residues 97–139 (AEEIEAEQRRELEEQRAAEEAARLKAEQEARERAEEEARRQAE) are compositionally biased toward basic and acidic residues. The disordered stretch occupies residues 97-253 (AEEIEAEQRR…QHGFQSPTGP (157 aa)). A compositionally biased stretch (low complexity) spans 140–175 (AAKAQTAETAAPAAAESASSAEPAQVVAAVEAAAPA). A compositionally biased stretch (basic and acidic residues) spans 176-197 (PERKKEEPRRVEKPRSDDDERR). Residues 198 to 208 (DRKHAQHRPSL) are compositionally biased toward basic residues. The segment covering 219–229 (RSGEDEADGFR) has biased composition (basic and acidic residues). The span at 230–244 (RGGRGGKSKLKKRNQ) shows a compositional bias: basic residues. Residues 337–504 (ARAPVVTVMG…AVLLQAEILE (168 aa)) enclose the tr-type G domain. Positions 346–353 (GHVDHGKT) are G1. 346–353 (GHVDHGKT) contacts GTP. The G2 stretch occupies residues 371 to 375 (GITQH). A G3 region spans residues 392–395 (DTPG). GTP is bound by residues 392–396 (DTPGH) and 446–449 (NKID). The G4 stretch occupies residues 446 to 449 (NKID). A G5 region spans residues 482–484 (SAK).

The protein belongs to the TRAFAC class translation factor GTPase superfamily. Classic translation factor GTPase family. IF-2 subfamily.

It is found in the cytoplasm. In terms of biological role, one of the essential components for the initiation of protein synthesis. Protects formylmethionyl-tRNA from spontaneous hydrolysis and promotes its binding to the 30S ribosomal subunits. Also involved in the hydrolysis of GTP during the formation of the 70S ribosomal complex. This Stutzerimonas stutzeri (strain A1501) (Pseudomonas stutzeri) protein is Translation initiation factor IF-2.